The following is a 442-amino-acid chain: MKKYDRGWASLETGAALLIVMLLIAWGAGIWQDYIQTKGWQTEARLVSNWTSAARSYIGKNYTTLQGSSTTTTPAVITTTMLKNTGFLSSGFTETNSEGQRLQAYVVRNAQNPELLQAMVVSSGGTPYPVKALIQMAKDITTGLGGYIQDGKTATGALRSWSVALSNYGAKSGNGHIAVLLSTDELSGAAEDTDRLYRFQVNGRPDLNKMHTAIDMGSNNLNNVGAVNAQTGNFSGNVNGVNGTFSGQVKGNSGNFDVNVTAGGDIRSNNGWLITRNSKGWLNETHGGGFYMSDGSWVRSVNNKGIYTGGQVKGGTVRADGRLYTGEYLQLERTAVAGASCSPNGLVGRDNTGAILSCQSGTWKSSSASIWTNIKTFTLYPKNTQVLGRFKLCINTYRIDGREMAETEVVPIDMPDSNGEMIWQAKNYTQYSSYFMKITCLK.

The segment at 1-361 is constant region; the sequence is MKKYDRGWAS…TGAILSCQSG (361 aa). The segment at 362-442 is variable region; sequence TWKSSSASIW…SYFMKITCLK (81 aa).

The protein is Shufflon protein B of Escherichia coli.